The sequence spans 266 residues: MIYSRSRLPSEGEILIATVKQVFDYGSYVTLDEYGGLQAFLPWSEVSSKWVKNIRDVLKENRKVVVKVIRVDRRKGTVDVSLKKVTDDERRKKNLQWKKIQRLDKILELVSQQLKLSEKDAWEQVAWKLEAKYGDPISAIERAVKEGEKILIDAGVPEIWIKPLLEEAAKHTEEKKVKMSGLITVKTSEPLGVQKIKEVMSKALENIEQDYESILNVKIYTIGAPRYRVDVVGTNPKDASEALNQIISNLIKIGKEENVDISVVKK.

In terms of domain architecture, S1 motif spans 12–83; the sequence is GEILIATVKQ…RKGTVDVSLK (72 aa).

It belongs to the eIF-2-alpha family. Heterotrimer composed of an alpha, a beta and a gamma chain.

EIF-2 functions in the early steps of protein synthesis by forming a ternary complex with GTP and initiator tRNA. The chain is Translation initiation factor 2 subunit alpha from Saccharolobus islandicus (strain Y.N.15.51 / Yellowstone #2) (Sulfolobus islandicus).